The sequence spans 245 residues: tRNA1(Val) (adenine(37)-N6)-methyltransferase (245 aa).

It belongs to the methyltransferase superfamily. tRNA (adenine-N(6)-)-methyltransferase family.

It localises to the cytoplasm. The catalysed reaction is adenosine(37) in tRNA1(Val) + S-adenosyl-L-methionine = N(6)-methyladenosine(37) in tRNA1(Val) + S-adenosyl-L-homocysteine + H(+). Its function is as follows. Specifically methylates the adenine in position 37 of tRNA(1)(Val) (anticodon cmo5UAC). This Escherichia coli (strain K12) protein is tRNA1(Val) (adenine(37)-N6)-methyltransferase (yfiC).